The chain runs to 154 residues: MAL-like protein (154 aa).

4 helical membrane-spanning segments follow: residues 24 to 44 (LFLTIPFAFFLPELVFGFWVW), 61 to 81 (VLYVSLTSFLISLMFLMSYLF), 99 to 119 (GTTGILYMSASVLQAYATIIS), and 131 to 151 (VAASFFAFLTTLLYILHAFSI). The MARVEL domain maps to 24–154 (LFLTIPFAFF…ILHAFSIYYH (131 aa)).

Belongs to the MAL family.

It localises to the membrane. The polypeptide is MAL-like protein (Mall) (Mus musculus (Mouse)).